The primary structure comprises 360 residues: Histidinol-phosphate aminotransferase (360 aa).

Lys222 carries the N6-(pyridoxal phosphate)lysine modification.

The protein belongs to the class-II pyridoxal-phosphate-dependent aminotransferase family. Histidinol-phosphate aminotransferase subfamily. As to quaternary structure, homodimer. It depends on pyridoxal 5'-phosphate as a cofactor.

It catalyses the reaction L-histidinol phosphate + 2-oxoglutarate = 3-(imidazol-4-yl)-2-oxopropyl phosphate + L-glutamate. Its pathway is amino-acid biosynthesis; L-histidine biosynthesis; L-histidine from 5-phospho-alpha-D-ribose 1-diphosphate: step 7/9. The polypeptide is Histidinol-phosphate aminotransferase (Listeria monocytogenes serotype 4b (strain CLIP80459)).